Consider the following 87-residue polypeptide: Omega-lycotoxin-Am1a (87 aa).

Residues 1–17 form the signal peptide; that stretch reads MKLSIFFVLFFIAIAYC. The propeptide occupies 18-40; sequence QPEFLDDEEDEVEETLPVAEEGR. 4 disulfides stabilise this stretch: C44-C59, C51-C64, C58-C84, and C66-C82.

Belongs to the neurotoxin omega-lctx family. As to expression, expressed by the venom gland.

Its subcellular location is the secreted. Its function is as follows. Modulates Cav2.1/CACNA1A voltage-gated calcium channels (P/Q-type currents) in rat cerebellar Purkinje cells and hippocampal CA1-CA3 neurons. At saturating concentrations (&gt;10 nM) decelerates activation kinetics and slightly increases peak amplitude without affecting deactivation kinetics. In vivo, does not cause death when intravenously injected into mice. In rat models, through its activity on Cav2.1/CACNA1A, has an ameliorative effect on memory defects provoked by hyperstimulation of N-methyl-D-aspartate receptors (NMDARs) in the hippocampus. The protein is Omega-lycotoxin-Am1a of Alopecosa marikovskyi (Wolf spider).